A 495-amino-acid chain; its full sequence is uncharacterized protein (495 aa).

The span at 305–317 (DYNNNNNENYSGS) shows a compositional bias: low complexity. The disordered stretch occupies residues 305–404 (DYNNNNNENY…LDEEDNRKNK (100 aa)). Residues 335–347 (YDNDENNDDENND) are compositionally biased toward acidic residues. Positions 348–363 (ENNNNNNNNNNNNNNN) are enriched in low complexity. A compositionally biased stretch (acidic residues) spans 386–398 (SDDDEADNELDEE).

This is an uncharacterized protein from Dictyostelium discoideum (Social amoeba).